Reading from the N-terminus, the 87-residue chain is MKRFEELFAELADKVDRQDPDSGTVQAVQEGRHAIGKKVIEEAGEVWMAAEHEGPDRTAEEISQLLYHLQVLMIACDLDLEDVYEHL.

Belongs to the PRA-PH family.

The protein localises to the cytoplasm. It carries out the reaction 1-(5-phospho-beta-D-ribosyl)-ATP + H2O = 1-(5-phospho-beta-D-ribosyl)-5'-AMP + diphosphate + H(+). It participates in amino-acid biosynthesis; L-histidine biosynthesis; L-histidine from 5-phospho-alpha-D-ribose 1-diphosphate: step 2/9. The protein is Phosphoribosyl-ATP pyrophosphatase of Salinibacter ruber (strain DSM 13855 / M31).